The chain runs to 130 residues: Small ribosomal subunit protein uS13 (130 aa).

Positions 97–116 are enriched in basic residues; the sequence is PVRGQRTKTNARTRRGKRKT. Residues 97–130 form a disordered region; that stretch reads PVRGQRTKTNARTRRGKRKTVGAGKSTSSIKRVK. Positions 121 to 130 are enriched in polar residues; that stretch reads KSTSSIKRVK.

Belongs to the universal ribosomal protein uS13 family. As to quaternary structure, part of the 30S ribosomal subunit. Forms a loose heterodimer with protein S19. Forms two bridges to the 50S subunit in the 70S ribosome.

Its function is as follows. Located at the top of the head of the 30S subunit, it contacts several helices of the 16S rRNA. In the 70S ribosome it contacts the 23S rRNA (bridge B1a) and protein L5 of the 50S subunit (bridge B1b), connecting the 2 subunits; these bridges are implicated in subunit movement. Contacts the tRNAs in the A and P-sites. The polypeptide is Small ribosomal subunit protein uS13 (Endomicrobium trichonymphae).